Reading from the N-terminus, the 101-residue chain is Small ribosomal subunit protein uS14 (101 aa).

Belongs to the universal ribosomal protein uS14 family. As to quaternary structure, part of the 30S ribosomal subunit. Contacts proteins S3 and S10.

Its function is as follows. Binds 16S rRNA, required for the assembly of 30S particles and may also be responsible for determining the conformation of the 16S rRNA at the A site. This chain is Small ribosomal subunit protein uS14, found in Burkholderia multivorans (strain ATCC 17616 / 249).